The chain runs to 123 residues: Small ribosomal subunit protein uS12c (123 aa).

It belongs to the universal ribosomal protein uS12 family. In terms of assembly, part of the 30S ribosomal subunit.

The protein resides in the plastid. Its subcellular location is the chloroplast. In terms of biological role, with S4 and S5 plays an important role in translational accuracy. Located at the interface of the 30S and 50S subunits. The protein is Small ribosomal subunit protein uS12c (rps12) of Chlorokybus atmophyticus (Soil alga).